We begin with the raw amino-acid sequence, 258 residues long: MPPQQGDPAFPDRCEAPPVPPRRERGGRGGRGPGEPGGRGRAGGAEGRGVKCVLVGDGAVGKTSLVVSYTTNGYPTEYIPTAFDNFSAVVSVDGRPVRLQLCDTAGQDEFDKLRPLCYTNTDIFLLCFSVVSPSSFQNVSEKWVPEIRCHCPKAPIILVGTQSDLREDVKVLIELDKCKEKPVPEEAAKLCAEEIKAASYIECSALTQKNLKEVFDAAIVAGIQYSDTQQQPKKSKSRTPDKMKNLSKSWWKKYCCFV.

Residues M1–A45 form a disordered region. The span at F10 to G27 shows a compositional bias: basic and acidic residues. The span at G29 to A45 shows a compositional bias: gly residues. GTP contacts are provided by residues G56–T63, D103–Q107, and T161–D164. Glycyl lysine isopeptide (Lys-Gly) (interchain with G-Cter in ubiquitin) cross-links involve residues K177 and K248. C256 carries the S-palmitoyl cysteine lipid modification.

It belongs to the small GTPase superfamily. Rho family. As to quaternary structure, interacts with PAK1. Interacts with PAK3. Interacts with ARHGAP30 in a GTP-independent manner. In its GTP-loaded conformation, interacts with ARHGAP31. Interacts with PTK2B/PYK2. Interacts with PAK4; the interaction is PAK4 kinase activity-independent and protects RHOU from ubiquitination. Mg(2+) serves as cofactor. Post-translationally, ubiquitinated. 'Lys-48'-linked ubiquitination at Lys-177 and Lys-248 by the ECS(RAB40A) complex leading to its degradation. Tyrosine phosphorylated by SRC in response to PTK2B/PYK2 activation. As to expression, ubiquitously expressed in all tissues examined. Expressed at high levels in the stomach, small intestine, brain, skeletal muscle and placenta.

It is found in the cell membrane. Its subcellular location is the golgi apparatus membrane. The protein resides in the cell junction. The protein localises to the focal adhesion. It localises to the cell projection. It is found in the podosome. In terms of biological role, binds to and activates protein kinase PAK1. Plays a role in the regulation of cell morphology, cytoskeletal organization and focal adhesion assembly during cell migration. Also stimulates quiescent cells to reenter the cell cycle. Has no detectable GTPase activity but its high intrinsic guanine nucleotide exchange activity suggests it is constitutively GTP-bound. The polypeptide is Rho-related GTP-binding protein RhoU (Homo sapiens (Human)).